A 206-amino-acid polypeptide reads, in one-letter code: Large ribosomal subunit protein uL4 (206 aa).

The protein belongs to the universal ribosomal protein uL4 family. In terms of assembly, part of the 50S ribosomal subunit.

One of the primary rRNA binding proteins, this protein initially binds near the 5'-end of the 23S rRNA. It is important during the early stages of 50S assembly. It makes multiple contacts with different domains of the 23S rRNA in the assembled 50S subunit and ribosome. Functionally, forms part of the polypeptide exit tunnel. This chain is Large ribosomal subunit protein uL4, found in Xanthobacter autotrophicus (strain ATCC BAA-1158 / Py2).